A 156-amino-acid polypeptide reads, in one-letter code: Probable chemoreceptor glutamine deamidase CheD (156 aa).

Belongs to the CheD family.

The enzyme catalyses L-glutaminyl-[protein] + H2O = L-glutamyl-[protein] + NH4(+). Functionally, probably deamidates glutamine residues to glutamate on methyl-accepting chemotaxis receptors (MCPs), playing an important role in chemotaxis. The protein is Probable chemoreceptor glutamine deamidase CheD of Bdellovibrio bacteriovorus (strain ATCC 15356 / DSM 50701 / NCIMB 9529 / HD100).